Here is a 477-residue protein sequence, read N- to C-terminus: Serine/threonine-protein kinase pakC (477 aa).

Residues 13–108 form the PH domain; sequence SPDKEGELKK…WMKAVEKGSE (96 aa). The 14-residue stretch at 112 to 125 folds into the CRIB domain; it reads VSQPFNLKHEVHVD. In terms of domain architecture, Protein kinase spans 204–458; it reads YKNMTKIGEG…ATDLLKHPFM (255 aa). ATP-binding positions include 210–218 and K233; that span reads IGEGAAGEV. The active-site Proton acceptor is the D326.

The protein belongs to the protein kinase superfamily. STE Ser/Thr protein kinase family. STE20 subfamily. In terms of assembly, interacts with GTP-bound racB. It depends on Mg(2+) as a cofactor.

The protein localises to the cytoplasm. Its subcellular location is the membrane. It carries out the reaction L-seryl-[protein] + ATP = O-phospho-L-seryl-[protein] + ADP + H(+). The enzyme catalyses L-threonyl-[protein] + ATP = O-phospho-L-threonyl-[protein] + ADP + H(+). Kinase activity is rapidly and transiently increased in response to chemoattractant stimulation. Functionally, has role in the regulation of chemotaxis. This chain is Serine/threonine-protein kinase pakC (pakC), found in Dictyostelium discoideum (Social amoeba).